The chain runs to 497 residues: Envelope glycoprotein E (497 aa).

The Virion surface segment spans residues 1-398; sequence MCVFQILIIV…GTIIYDILLT (398 aa). N-linked (GlcNAc...) asparagine; by host glycosylation is found at Asn60, Asn133, Asn148, Asn203, Asn277, Asn366, and Asn388. A helical membrane pass occupies residues 399 to 419; that stretch reads SLSIGAIIIVIVGGVCIAILI. Residues 420-497 are Intravirion-facing; sequence RRRRRRRTRG…KIRKRLDLYH (78 aa).

The protein belongs to the alphaherpesvirinae glycoprotein E family. Interacts with gI. Post-translationally, phosphorylated within the acidic cluster. Phosphorylation determines whether endocytosed viral gE traffics to the trans-Golgi network or recycles to the cell membrane.

It is found in the virion membrane. The protein resides in the host cell membrane. Its subcellular location is the host cell junction. The protein localises to the host Golgi apparatus membrane. It localises to the host endosome membrane. Its function is as follows. In epithelial cells, the heterodimer gE/gI is required for the cell-to-cell spread of the virus, by sorting nascent virions to cell junctions. Once the virus reaches the cell junctions, virus particles can spread to adjacent cells extremely rapidly through interactions with cellular receptors that accumulate at these junctions. Implicated in basolateral spread in polarized cells. In neuronal cells, gE/gI is essential for the anterograde spread of the infection throughout the host nervous system. Together with US9, the heterodimer gE/gI is involved in the sorting and transport of viral structural components toward axon tips. This chain is Envelope glycoprotein E (MDV096), found in Gallus gallus (Chicken).